The following is a 394-amino-acid chain: Elongation factor Tu (394 aa).

Residues 10–204 (KPHVNVGTIG…ALDSYIPEPE (195 aa)) form the tr-type G domain. The segment at 19–26 (GHVDHGKT) is G1. 19-26 (GHVDHGKT) contributes to the GTP binding site. Thr26 provides a ligand contact to Mg(2+). The G2 stretch occupies residues 60 to 64 (GITIA). The segment at 81 to 84 (DCPG) is G3. GTP is bound by residues 81–85 (DCPGH) and 136–139 (NKCD). The segment at 136–139 (NKCD) is G4. A G5 region spans residues 174 to 176 (SAL).

The protein belongs to the TRAFAC class translation factor GTPase superfamily. Classic translation factor GTPase family. EF-Tu/EF-1A subfamily. Monomer.

The protein localises to the cytoplasm. It carries out the reaction GTP + H2O = GDP + phosphate + H(+). Its function is as follows. GTP hydrolase that promotes the GTP-dependent binding of aminoacyl-tRNA to the A-site of ribosomes during protein biosynthesis. The sequence is that of Elongation factor Tu from Vibrio campbellii (strain ATCC BAA-1116).